A 464-amino-acid chain; its full sequence is MEKKESLDSSLKEIVSVCKRRGFVYPGSEIYGGLSNTFDYGPYGVELLQNLKQLWWKYFVHLREDIVGLDSSILLNPKVWEASGHVSNFNDPLIDCKNCKTRIRADKFLEDQKGEGFATGLTLEKMNQVIKESNFACPNCGQRGTFTEARDFNLMFKTSHGASAEDSLDIYLRPETAQGIFLNFKNVVSTTRRKIPFGIAQIGKSFRNEIMARQFVFRTREFEQMEMEFFCEPGTQKEWFSHWVNYCMNWLTEQVGIKKENLRVREHEKEELSFYSEGTSDIEFKYNFGWGELWGIASRTDYDLNQHQKFSGEDLKYQDQVQNKKYVPFVVEPALGVNRLFLAVVTDAYEEEKLPDGETRTVLRFSPKIAPVKAAVFPLMKKDGLPEKSREIFADLSKLGNIEYDDGGAIGKRYRRQDEIGTPFCITVDYDTLKDNTVTVRERDSMSQERIAVNQLKNWLFERL.

Positions 104 and 175 each coordinate substrate. Residues 207-209 (RNE), 217-222 (FRTREF), 292-293 (EL), and 336-339 (GVNR) contribute to the ATP site. 222–226 (FEQME) serves as a coordination point for substrate. Substrate is bound at residue 332–336 (EPALG).

This sequence belongs to the class-II aminoacyl-tRNA synthetase family. In terms of assembly, homodimer.

Its subcellular location is the cytoplasm. It carries out the reaction tRNA(Gly) + glycine + ATP = glycyl-tRNA(Gly) + AMP + diphosphate. In terms of biological role, catalyzes the attachment of glycine to tRNA(Gly). This chain is Glycine--tRNA ligase, found in Leptospira interrogans serogroup Icterohaemorrhagiae serovar copenhageni (strain Fiocruz L1-130).